Consider the following 370-residue polypeptide: Dual-specificity RNA methyltransferase RlmN (370 aa).

Glu93 (proton acceptor) is an active-site residue. In terms of domain architecture, Radical SAM core spans 99 to 331 (DRKRGTLCVS…TRVRRTRGDD (233 aa)). An intrachain disulfide couples Cys106 to Cys336. [4Fe-4S] cluster contacts are provided by Cys113, Cys117, and Cys120. Residues 162 to 163 (GE), Ser194, 216 to 218 (SLH), and Asn293 contribute to the S-adenosyl-L-methionine site. Residue Cys336 is the S-methylcysteine intermediate of the active site.

The protein belongs to the radical SAM superfamily. RlmN family. Requires [4Fe-4S] cluster as cofactor.

The protein resides in the cytoplasm. The catalysed reaction is adenosine(2503) in 23S rRNA + 2 reduced [2Fe-2S]-[ferredoxin] + 2 S-adenosyl-L-methionine = 2-methyladenosine(2503) in 23S rRNA + 5'-deoxyadenosine + L-methionine + 2 oxidized [2Fe-2S]-[ferredoxin] + S-adenosyl-L-homocysteine. The enzyme catalyses adenosine(37) in tRNA + 2 reduced [2Fe-2S]-[ferredoxin] + 2 S-adenosyl-L-methionine = 2-methyladenosine(37) in tRNA + 5'-deoxyadenosine + L-methionine + 2 oxidized [2Fe-2S]-[ferredoxin] + S-adenosyl-L-homocysteine. In terms of biological role, specifically methylates position 2 of adenine 2503 in 23S rRNA and position 2 of adenine 37 in tRNAs. m2A2503 modification seems to play a crucial role in the proofreading step occurring at the peptidyl transferase center and thus would serve to optimize ribosomal fidelity. The polypeptide is Dual-specificity RNA methyltransferase RlmN (Coxiella burnetii (strain RSA 493 / Nine Mile phase I)).